The sequence spans 295 residues: Zinc finger CCCH domain-containing protein 44 (295 aa).

The segment at 1–31 (MEAGGGKRAAPEGTNGAAKRARASESSQVGV) is disordered. 2 C3H1-type zinc fingers span residues 32–60 (GSKL…HNFP) and 98–126 (SVKT…HGER). One can recognise a KH domain in the interval 166–230 (SATAKISVDA…DQIKHASAMV (65 aa)). The C3H1-type 3 zinc finger occupies 259–286 (NFKTKLCENFNKGSCTFGDRCHFAHGES).

In Oryza sativa subsp. japonica (Rice), this protein is Zinc finger CCCH domain-containing protein 44.